Here is a 386-residue protein sequence, read N- to C-terminus: Phosphate acyltransferase (386 aa).

A disordered region spans residues Pro-359–Thr-386. Positions Gln-377–Thr-386 are enriched in polar residues.

It belongs to the PlsX family. In terms of assembly, homodimer. Probably interacts with PlsY.

Its subcellular location is the cytoplasm. It carries out the reaction a fatty acyl-[ACP] + phosphate = an acyl phosphate + holo-[ACP]. It participates in lipid metabolism; phospholipid metabolism. In terms of biological role, catalyzes the reversible formation of acyl-phosphate (acyl-PO(4)) from acyl-[acyl-carrier-protein] (acyl-ACP). This enzyme utilizes acyl-ACP as fatty acyl donor, but not acyl-CoA. This is Phosphate acyltransferase from Beijerinckia indica subsp. indica (strain ATCC 9039 / DSM 1715 / NCIMB 8712).